Reading from the N-terminus, the 1387-residue chain is Collagen-like protein 6 (1387 aa).

N6 is a glycosylation site (N-linked (GlcNAc...) asparagine; by host). Collagen-like domains lie at 95-154 (GNNG…KGDI), 161-220 (GDKG…KGDN), 266-325 (GEKG…KGEM), 344-403 (GSKG…KGEK), 450-508 (IKGD…KGDI), and 512-751 (GEKG…SGSS). 3 disordered regions span residues 98 to 219 (GNNG…DKGD), 268 to 422 (KGEI…QNQG), and 454 to 753 (KGEK…SSCQ). Composition is skewed to basic and acidic residues over residues 114–181 (IKGD…KGSK), 189–199 (SKGDNGDKGSK), 207–219 (SKGDKGNKGDKGD), 268–340 (KGEI…DGIK), 364–382 (KGDRGDKGDKGSKGDKGDN), 390–405 (SKGDKGDNGIKGEKGE), 454–535 (KGEK…KGDI), and 544–747 (KGEK…DKGE). Residues N794, N814, N819, N826, N846, N886, N894, N969, N1032, N1077, N1123, N1200, N1224, N1232, and N1233 are each glycosylated (N-linked (GlcNAc...) asparagine; by host).

In terms of processing, may be hydroxylated on lysine by the viral-encoded procollagen-lysine,2-oxoglutarate 5-dioxygenase.

The protein resides in the virion. May participate in the formation of a layer of cross-linked glycosylated fibrils at the viral surface thus giving it a hairy-like appearance. This Acanthamoeba polyphaga mimivirus (APMV) protein is Collagen-like protein 6.